Reading from the N-terminus, the 466-residue chain is Asparagine--tRNA ligase (466 aa).

Belongs to the class-II aminoacyl-tRNA synthetase family. As to quaternary structure, homodimer.

The protein resides in the cytoplasm. It carries out the reaction tRNA(Asn) + L-asparagine + ATP = L-asparaginyl-tRNA(Asn) + AMP + diphosphate + H(+). The protein is Asparagine--tRNA ligase of Idiomarina loihiensis (strain ATCC BAA-735 / DSM 15497 / L2-TR).